Consider the following 89-residue polypeptide: UPF0335 protein RPE_4107 (89 aa).

The protein belongs to the UPF0335 family.

In Rhodopseudomonas palustris (strain BisA53), this protein is UPF0335 protein RPE_4107.